We begin with the raw amino-acid sequence, 260 residues long: MVLIRVLANLLVLHLSYAQKSSELVIGGDECNINEHPFLALMYNSTSMKFHCSGTLLNEEWVLTAAHCDMENMQIYLGVHDKKNPNKDQQTRVPKEMFFCLSNKSYTPWDKDIMLIRLNSPVTYSTHIAPFSLPSSPPTVGSVCRIMGWGAITSPNETYPDVPHCANIEIYDYSVCRKAYGGLPEKSRTLCAGVLQGGIDTCLADSGGPLICNGQFQGIVAWGRHPCAQPQLPAFYTKVFDYSDWIQSIIAGNTAATCPS.

A signal peptide spans 1-18; that stretch reads MVLIRVLANLLVLHLSYA. Residues 19-24 constitute a propeptide that is removed on maturation; it reads QKSSEL. The 227-residue stretch at 25–251 folds into the Peptidase S1 domain; it reads VIGGDECNIN…YSDWIQSIIA (227 aa). Disulfide bonds link cysteine 31-cysteine 165, cysteine 52-cysteine 68, cysteine 100-cysteine 258, cysteine 144-cysteine 212, cysteine 176-cysteine 191, and cysteine 202-cysteine 227. The N-linked (GlcNAc...) asparagine glycan is linked to asparagine 44. Histidine 67 acts as the Charge relay system in catalysis. An N-linked (GlcNAc...) asparagine glycan is attached at asparagine 103. The Charge relay system role is filled by aspartate 112. Asparagine 156 is a glycosylation site (N-linked (GlcNAc...) asparagine). Serine 206 (charge relay system) is an active-site residue.

Belongs to the peptidase S1 family. Snake venom subfamily. Expressed by the venom gland.

The protein localises to the secreted. Snake venom serine protease that may act in the hemostasis system of the prey. This Macrovipera lebetinus (Levantine viper) protein is Serine protease VLSP-1.